We begin with the raw amino-acid sequence, 294 residues long: Major pollen allergen Pha a 5.3 (294 aa).

Positions 1–25 (MAVQKYTVALFLAMALVAGPAASYA) are cleaved as a signal peptide.

This sequence belongs to the Poa p IX/Phl p VI allergen family.

This is Major pollen allergen Pha a 5.3 from Phalaris aquatica (Canary grass).